The chain runs to 305 residues: Undecaprenyl-diphosphatase (305 aa).

A run of 8 helical transmembrane segments spans residues 18–38 (GVTE…PALV), 55–75 (YLAF…VFFW), 103–123 (WLIV…EQLF), 130–150 (PVPA…GEVL), 187–207 (GVLI…RSGI), 225–245 (FSFL…IPEL), 246–266 (FGPL…ASFV), and 284–304 (LTPF…WLAL).

It belongs to the UppP family.

It localises to the cell membrane. The enzyme catalyses di-trans,octa-cis-undecaprenyl diphosphate + H2O = di-trans,octa-cis-undecaprenyl phosphate + phosphate + H(+). Its function is as follows. Catalyzes the dephosphorylation of undecaprenyl diphosphate (UPP). Confers resistance to bacitracin. This Mycolicibacterium paratuberculosis (strain ATCC BAA-968 / K-10) (Mycobacterium paratuberculosis) protein is Undecaprenyl-diphosphatase.